A 513-amino-acid chain; its full sequence is Aspartic proteinase A2 (513 aa).

Residues 1–24 form the signal peptide; the sequence is MGVYSRAVAFSVFVSFLLFFTAYS. A propeptide spans 25 to 71 (activation peptide); that stretch reads KRNDGTFRVGLKKLKLDPNNRLATRFGSKQEEALRSSLRSYNNNLGG. Residues 89–510 form the Peptidase A1 domain; it reads YYGEIAIGTP…DFGNEQVGFA (422 aa). Aspartate 107 is an active-site residue. Disulfide bonds link cysteine 120/cysteine 126 and cysteine 285/cysteine 289. Aspartate 294 is a catalytic residue. The region spanning 319–424 is the Saposin B-type domain; it reads VVSQQCKTVV…NEICERMPSP (106 aa). 4 disulfide bridges follow: cysteine 324–cysteine 418, cysteine 349–cysteine 390, cysteine 355–cysteine 387, and cysteine 432–cysteine 469. Residue asparagine 404 is glycosylated (N-linked (GlcNAc...) asparagine).

The protein belongs to the peptidase A1 family. In terms of tissue distribution, expressed in seed pods and dry seeds.

The protein resides in the vacuole. Its function is as follows. Involved in the breakdown of propeptides of storage proteins in protein-storage vacuoles. This is Aspartic proteinase A2 (APA2) from Arabidopsis thaliana (Mouse-ear cress).